The chain runs to 293 residues: Glutamyl-Q tRNA(Asp) synthetase (293 aa).

Residues 4–8 (RYAPS) and glutamate 40 contribute to the L-glutamate site. A 'HIGH' region motif is present at residues 7 to 17 (PSPSGDLHFGN). Zn(2+) contacts are provided by cysteine 92, cysteine 94, tyrosine 113, and cysteine 117. L-glutamate is bound by residues tyrosine 180 and arginine 198. The 'KMSKS' region motif lies at 236–240 (RLAKR). Lysine 239 lines the ATP pocket.

This sequence belongs to the class-I aminoacyl-tRNA synthetase family. GluQ subfamily. It depends on Zn(2+) as a cofactor.

In terms of biological role, catalyzes the tRNA-independent activation of glutamate in presence of ATP and the subsequent transfer of glutamate onto a tRNA(Asp). Glutamate is transferred on the 2-amino-5-(4,5-dihydroxy-2-cyclopenten-1-yl) moiety of the queuosine in the wobble position of the QUC anticodon. The protein is Glutamyl-Q tRNA(Asp) synthetase of Corynebacterium glutamicum (strain ATCC 13032 / DSM 20300 / JCM 1318 / BCRC 11384 / CCUG 27702 / LMG 3730 / NBRC 12168 / NCIMB 10025 / NRRL B-2784 / 534).